A 508-amino-acid polypeptide reads, in one-letter code: Maturase K (508 aa).

The protein belongs to the intron maturase 2 family. MatK subfamily.

Its subcellular location is the plastid. The protein localises to the chloroplast. Usually encoded in the trnK tRNA gene intron. Probably assists in splicing its own and other chloroplast group II introns. This chain is Maturase K, found in Verbena rigida (Tuberous vervain).